The following is a 197-amino-acid chain: ATP-dependent Clp protease proteolytic subunit (197 aa).

The active-site Nucleophile is Ser98. His123 is an active-site residue.

Belongs to the peptidase S14 family. In terms of assembly, fourteen ClpP subunits assemble into 2 heptameric rings which stack back to back to give a disk-like structure with a central cavity, resembling the structure of eukaryotic proteasomes.

Its subcellular location is the cytoplasm. It carries out the reaction Hydrolysis of proteins to small peptides in the presence of ATP and magnesium. alpha-casein is the usual test substrate. In the absence of ATP, only oligopeptides shorter than five residues are hydrolyzed (such as succinyl-Leu-Tyr-|-NHMec, and Leu-Tyr-Leu-|-Tyr-Trp, in which cleavage of the -Tyr-|-Leu- and -Tyr-|-Trp bonds also occurs).. In terms of biological role, cleaves peptides in various proteins in a process that requires ATP hydrolysis. Has a chymotrypsin-like activity. Plays a major role in the degradation of misfolded proteins. This Ligilactobacillus salivarius (strain UCC118) (Lactobacillus salivarius) protein is ATP-dependent Clp protease proteolytic subunit.